A 163-amino-acid chain; its full sequence is MKTLDKITNYDLFDFADEFLKFVPVFRPNPTVTCLFGNPLTNLLVNGTGAACFFEFCSLALIKVSKILLDLLLLALLIDSENELCFEIDGDWLCVLGFGEGDLEVGRSLGMALPDDDVLLSITFWFLCNSSFSILFVFELRIFLRTVNNLLVVFLSVLKRNDL.

Residues 1 to 33 (MKTLDKITNYDLFDFADEFLKFVPVFRPNPTVT) lie on the Cytoplasmic side of the membrane. A helical transmembrane segment spans residues 34–54 (CLFGNPLTNLLVNGTGAACFF). At 55–117 (EFCSLALIKV…SLGMALPDDD (63 aa)) the chain is on the extracellular side. A helical transmembrane segment spans residues 118–138 (VLLSITFWFLCNSSFSILFVF). Over 139-163 (ELRIFLRTVNNLLVVFLSVLKRNDL) the chain is Cytoplasmic.

The protein resides in the membrane. This is an uncharacterized protein from Saccharomyces cerevisiae (strain ATCC 204508 / S288c) (Baker's yeast).